We begin with the raw amino-acid sequence, 955 residues long: Structure-specific endonuclease subunit SLX4 (955 aa).

Disordered stretches follow at residues 75 to 173 (QAEQ…RTTS), 189 to 231 (PVTT…TVSR), 352 to 376 (GPSN…KKPR), 539 to 608 (EMQK…PTKI), 621 to 648 (PIVA…PPPR), 705 to 784 (AAGQ…ASPD), and 819 to 846 (LDSD…EKDS). Basic residues predominate over residues 123 to 137 (RKARKTANGVTKKKR). Residues 150–159 (NEITTPTKNQ) show a composition bias toward polar residues. Residues 189-198 (PVTTSTTDLT) show a composition bias toward low complexity. The segment covering 209 to 225 (TKSRVRKTSSAASRKKK) has biased composition (basic residues). Polar residues predominate over residues 352 to 362 (GPSNDSKIPNQ). Basic and acidic residues predominate over residues 539 to 551 (EMQKSPSRSEPKG). A compositionally biased stretch (polar residues) spans 579-601 (SANSAEHTLKTQASKSTHFASTT). 2 stretches are compositionally biased toward low complexity: residues 705–720 (AAGQ…RTSA) and 727–737 (KTSTAAAAAKS). 2 stretches are compositionally biased toward basic residues: residues 738 to 748 (PTKRPVGRPRK) and 767 to 776 (KRPRGRPKKN). Residues 828–841 (SPSPSLSPEPVFSS) are compositionally biased toward low complexity.

Belongs to the SLX4 family. In terms of assembly, forms a heterodimer with SLX1. Post-translationally, phosphorylated in response to DNA damage.

The protein resides in the nucleus. In terms of biological role, regulatory subunit of the SLX1-SLX4 structure-specific endonuclease that resolves DNA secondary structures generated during DNA repair and recombination. Has endonuclease activity towards branched DNA substrates, introducing single-strand cuts in duplex DNA close to junctions with ss-DNA. In Pyricularia oryzae (strain 70-15 / ATCC MYA-4617 / FGSC 8958) (Rice blast fungus), this protein is Structure-specific endonuclease subunit SLX4.